The sequence spans 373 residues: Flagellar P-ring protein (373 aa).

Positions 1–26 (MKLFFRFLTLVAVLAMSLADVAPAWA) are cleaved as a signal peptide.

This sequence belongs to the FlgI family. As to quaternary structure, the basal body constitutes a major portion of the flagellar organelle and consists of four rings (L,P,S, and M) mounted on a central rod.

It localises to the periplasm. It is found in the bacterial flagellum basal body. Functionally, assembles around the rod to form the L-ring and probably protects the motor/basal body from shearing forces during rotation. This is Flagellar P-ring protein from Rhizobium leguminosarum bv. trifolii (strain WSM2304).